We begin with the raw amino-acid sequence, 269 residues long: MKITKYRTKKSLGQCFILDPAIAEKIVSYAGCLEQYNVIEVGPGLGIMTQSILNKEVRRLTAIEKDRRLSNIHSKLKEAHAEYDCIFEDILDVNIEQLLSQSPLKMISNLPYNISVILLLKLLPYIHRFEKLILMFQKEVADRIVAQPNTKSYSILSILVQLLCDVRKVEDFPPEIFSPSPKVYSSVIEITPLLSPRFSVDNSYFAQVLKKLFHCRRKTIRNSLKSCIKDADALFIGCNIDPNARAESLTIEQLCSLTNALKARNINII.

Residues I17, G42, E64, D89, and N109 each coordinate S-adenosyl-L-methionine.

The protein belongs to the class I-like SAM-binding methyltransferase superfamily. rRNA adenine N(6)-methyltransferase family. RsmA subfamily.

Its subcellular location is the cytoplasm. The enzyme catalyses adenosine(1518)/adenosine(1519) in 16S rRNA + 4 S-adenosyl-L-methionine = N(6)-dimethyladenosine(1518)/N(6)-dimethyladenosine(1519) in 16S rRNA + 4 S-adenosyl-L-homocysteine + 4 H(+). Specifically dimethylates two adjacent adenosines (A1518 and A1519) in the loop of a conserved hairpin near the 3'-end of 16S rRNA in the 30S particle. May play a critical role in biogenesis of 30S subunits. The protein is Ribosomal RNA small subunit methyltransferase A of Anaplasma phagocytophilum (strain HZ).